Consider the following 275-residue polypeptide: Phosphate import ATP-binding protein PstB 1 (275 aa).

Residues 22 to 261 (FNVEGVKVYY…SPTEQMFNSP (240 aa)) form the ABC transporter domain. 54-61 (GPSGCGKS) serves as a coordination point for ATP.

It belongs to the ABC transporter superfamily. Phosphate importer (TC 3.A.1.7) family. In terms of assembly, the complex is composed of two ATP-binding proteins (PstB), two transmembrane proteins (PstC and PstA) and a solute-binding protein (PstS).

It is found in the cell inner membrane. It catalyses the reaction phosphate(out) + ATP + H2O = ADP + 2 phosphate(in) + H(+). Functionally, part of the ABC transporter complex PstSACB involved in phosphate import. Responsible for energy coupling to the transport system. This chain is Phosphate import ATP-binding protein PstB 1, found in Trichormus variabilis (strain ATCC 29413 / PCC 7937) (Anabaena variabilis).